The following is a 394-amino-acid chain: Elongation factor Tu (394 aa).

In terms of domain architecture, tr-type G spans 10–205 (KPHMNVGTIG…TMDNYFDLPE (196 aa)). The interval 19-26 (GHVDHGKT) is G1. Residue 19 to 26 (GHVDHGKT) participates in GTP binding. Thr-26 contacts Mg(2+). The tract at residues 61-65 (GITIN) is G2. A G3 region spans residues 82–85 (DCPG). Residues 82 to 86 (DCPGH) and 137 to 140 (NKLD) contribute to the GTP site. Residues 137-140 (NKLD) are G4. A G5 region spans residues 173-175 (SAF).

Belongs to the TRAFAC class translation factor GTPase superfamily. Classic translation factor GTPase family. EF-Tu/EF-1A subfamily. In terms of assembly, monomer.

The protein localises to the cytoplasm. It catalyses the reaction GTP + H2O = GDP + phosphate + H(+). In terms of biological role, GTP hydrolase that promotes the GTP-dependent binding of aminoacyl-tRNA to the A-site of ribosomes during protein biosynthesis. The protein is Elongation factor Tu of Borrelia duttonii (strain Ly).